We begin with the raw amino-acid sequence, 183 residues long: ATP synthase subunit delta (183 aa).

It belongs to the ATPase delta chain family. In terms of assembly, F-type ATPases have 2 components, F(1) - the catalytic core - and F(0) - the membrane proton channel. F(1) has five subunits: alpha(3), beta(3), gamma(1), delta(1), epsilon(1). F(0) has three main subunits: a(1), b(2) and c(10-14). The alpha and beta chains form an alternating ring which encloses part of the gamma chain. F(1) is attached to F(0) by a central stalk formed by the gamma and epsilon chains, while a peripheral stalk is formed by the delta and b chains.

It is found in the cell inner membrane. Functionally, f(1)F(0) ATP synthase produces ATP from ADP in the presence of a proton or sodium gradient. F-type ATPases consist of two structural domains, F(1) containing the extramembraneous catalytic core and F(0) containing the membrane proton channel, linked together by a central stalk and a peripheral stalk. During catalysis, ATP synthesis in the catalytic domain of F(1) is coupled via a rotary mechanism of the central stalk subunits to proton translocation. Its function is as follows. This protein is part of the stalk that links CF(0) to CF(1). It either transmits conformational changes from CF(0) to CF(1) or is implicated in proton conduction. In Chloroherpeton thalassium (strain ATCC 35110 / GB-78), this protein is ATP synthase subunit delta.